Consider the following 427-residue polypeptide: L-rhamnose isomerase (427 aa).

3 residues coordinate Mn(2+): His-264, Asp-296, and Asp-298.

This sequence belongs to the rhamnose isomerase family. Mn(2+) serves as cofactor.

The protein localises to the cytoplasm. It catalyses the reaction L-rhamnopyranose = L-rhamnulose. It participates in carbohydrate degradation; L-rhamnose degradation; glycerone phosphate from L-rhamnose: step 1/3. Functionally, catalyzes the interconversion of L-rhamnose and L-rhamnulose. The sequence is that of L-rhamnose isomerase from Rhodopirellula baltica (strain DSM 10527 / NCIMB 13988 / SH1).